A 130-amino-acid chain; its full sequence is S-adenosylmethionine decarboxylase proenzyme (130 aa).

Ser-66 (schiff-base intermediate with substrate; via pyruvic acid) is an active-site residue. Ser-66 carries the pyruvic acid (Ser); by autocatalysis modification. The active-site Proton acceptor; for processing activity is the His-71. Cys-86 functions as the Proton donor; for catalytic activity in the catalytic mechanism.

Belongs to the prokaryotic AdoMetDC family. Type 1 subfamily. In terms of assembly, heterotetramer of two alpha and two beta chains arranged as a dimer of alpha/beta heterodimers. Requires pyruvate as cofactor. Is synthesized initially as an inactive proenzyme. Formation of the active enzyme involves a self-maturation process in which the active site pyruvoyl group is generated from an internal serine residue via an autocatalytic post-translational modification. Two non-identical subunits are generated from the proenzyme in this reaction, and the pyruvate is formed at the N-terminus of the alpha chain, which is derived from the carboxyl end of the proenzyme. The post-translation cleavage follows an unusual pathway, termed non-hydrolytic serinolysis, in which the side chain hydroxyl group of the serine supplies its oxygen atom to form the C-terminus of the beta chain, while the remainder of the serine residue undergoes an oxidative deamination to produce ammonia and the pyruvoyl group blocking the N-terminus of the alpha chain.

It carries out the reaction S-adenosyl-L-methionine + H(+) = S-adenosyl 3-(methylsulfanyl)propylamine + CO2. It functions in the pathway amine and polyamine biosynthesis; S-adenosylmethioninamine biosynthesis; S-adenosylmethioninamine from S-adenosyl-L-methionine: step 1/1. Its function is as follows. Catalyzes the decarboxylation of S-adenosylmethionine to S-adenosylmethioninamine (dcAdoMet), the propylamine donor required for the synthesis of the polyamines spermine and spermidine from the diamine putrescine. In Bacillus cereus (strain ATCC 10987 / NRS 248), this protein is S-adenosylmethionine decarboxylase proenzyme.